The chain runs to 135 residues: Small ribosomal subunit protein uS11 (135 aa).

Residues Met1–Gly10 are compositionally biased toward polar residues. The interval Met1–His28 is disordered. Basic residues predominate over residues Lys12–His28.

The protein belongs to the universal ribosomal protein uS11 family. Part of the 30S ribosomal subunit. Interacts with proteins S7 and S18. Binds to IF-3.

Its function is as follows. Located on the platform of the 30S subunit, it bridges several disparate RNA helices of the 16S rRNA. Forms part of the Shine-Dalgarno cleft in the 70S ribosome. In Acidothermus cellulolyticus (strain ATCC 43068 / DSM 8971 / 11B), this protein is Small ribosomal subunit protein uS11.